An 854-amino-acid polypeptide reads, in one-letter code: SH2 domain-containing protein 3C (854 aa).

Serine 22 is subject to Phosphoserine. Residues 34–43 (RSSASASIRS) show a composition bias toward low complexity. Positions 34–129 (RSSASASIRS…AKEAGEGTEA (96 aa)) are disordered. Basic and acidic residues predominate over residues 99–124 (EVSRESHLVSRRLPEPPDLEAAKEAG). The region spanning 215-314 (WYHGRIPREV…QSGAIIYCPV (100 aa)) is the SH2 domain. Phosphotyrosine is present on residues tyrosine 273 and tyrosine 278. Disordered regions lie at residues 330-384 (SQGS…PRDS), 398-417 (LHSPLSPISESPSSPAYSTV), and 422-520 (APSA…ERQK). Low complexity predominate over residues 333-347 (SSKTASPASPSGSKG). A Phosphoserine modification is found at serine 354. Low complexity-rich tracts occupy residues 400 to 415 (SPLSPISESPSSPAYS), 422 to 436 (APSATPSTSAQPASP), and 474 to 485 (SPSPSLSSYSDP). The residue at position 435 (serine 435) is a Phosphoserine. A compositionally biased stretch (basic and acidic residues) spans 508–520 (TPRKARGSGERQK). The 269-residue stretch at 580-848 (DARTLARHVT…TALSHKLEPA (269 aa)) folds into the Ras-GEF domain. Tyrosine 787 is modified (phosphotyrosine).

In terms of assembly, component of a complex comprised of SH2D3C, BCAR1/CAS, and CRK. Within the complex, interacts with CRK and (via C-terminus) with BCAR1/CAS (via C-terminus). Interacts with NEDD9/HEF1. Interacts with EPHB2. Interacts with NEDD9/HEF1. Interacts with BCAR1/CAS. Interacts with PTK2B. As to quaternary structure, interacts (via C-terminus) with BCAR1/CAS (via C-terminus). Interacts with IGF1. In terms of processing, phosphorylated by MAPK/ERK upon T-cell receptor stimulation in T-cells. In terms of tissue distribution, expressed in the olfactory bulb and olfactory sensory neurons (at protein level). Expressed in B cells (at protein level). Expressed in T lymphocytes. As to expression, expressed in hematopoietic cells from spleen, lymph node and thymus (at protein level). Expressed weakly in the lung (at protein level). Expressed in the brain, lung, kidney, and weakly expressed in the liver and lung (at protein level).

It localises to the cytoplasm. The protein resides in the cell membrane. The protein localises to the cell projection. It is found in the axon. Its subcellular location is the ruffle membrane. Acts as an adapter protein that mediates cell signaling pathways involved in cellular functions such as cell adhesion and migration, tissue organization, and the regulation of the immune response. Plays a role in integrin-mediated cell adhesion through BCAR1-CRK-RAPGEF1 signaling and activation of the small GTPase RAP1. Promotes cell migration and invasion through the extracellular matrix. Required for marginal zone B-cell development and thymus-independent type 2 immune responses. Mediates migration and adhesion of B cells in the splenic marginal zone via promoting hyperphosphorylation of NEDD9/CASL. Plays a role in CXCL13-induced chemotaxis of B-cells. Plays a role in the migration of olfactory sensory neurons (OSNs) into the forebrain and the innervation of the olfactory bulb by the OSN axons during development. Required for the efficient tyrosine phosphorylation of BCAR1 in OSN axons. In terms of biological role, important regulator of chemokine-induced, integrin-mediated T lymphocyte adhesion and migration, acting upstream of RAP1. Required for tissue-specific adhesion of T lymphocytes to peripheral tissues. Required for basal and CXCL2 stimulated serine-threonine phosphorylation of NEDD9. May be involved in the regulation of T-cell receptor-mediated IL2 production through the activation of the JNK pathway in T-cells. Its function is as follows. May be involved in the BCAR1/CAS-mediated JNK activation pathway. This is SH2 domain-containing protein 3C (Sh2d3c) from Mus musculus (Mouse).